A 230-amino-acid chain; its full sequence is 7-cyano-7-deazaguanine synthase (230 aa).

14-24 is an ATP binding site; sequence LSGGLDSTTTL. Zn(2+) is bound by residues Cys194, Cys204, Cys207, and Cys210.

This sequence belongs to the QueC family. It depends on Zn(2+) as a cofactor.

The enzyme catalyses 7-carboxy-7-deazaguanine + NH4(+) + ATP = 7-cyano-7-deazaguanine + ADP + phosphate + H2O + H(+). Its pathway is purine metabolism; 7-cyano-7-deazaguanine biosynthesis. Catalyzes the ATP-dependent conversion of 7-carboxy-7-deazaguanine (CDG) to 7-cyano-7-deazaguanine (preQ(0)). The protein is 7-cyano-7-deazaguanine synthase of Vesicomyosocius okutanii subsp. Calyptogena okutanii (strain HA).